The primary structure comprises 236 residues: Small ribosomal subunit protein uS3 (236 aa).

The KH type-2 domain occupies 39-107 (IRLYVLEELK…ETSLNIVEIH (69 aa)). The tract at residues 216–236 (ERRAAEVDHSGSSSNRRRENA) is disordered.

It belongs to the universal ribosomal protein uS3 family. As to quaternary structure, part of the 30S ribosomal subunit. Forms a tight complex with proteins S10 and S14.

Functionally, binds the lower part of the 30S subunit head. Binds mRNA in the 70S ribosome, positioning it for translation. This chain is Small ribosomal subunit protein uS3, found in Bartonella henselae (strain ATCC 49882 / DSM 28221 / CCUG 30454 / Houston 1) (Rochalimaea henselae).